We begin with the raw amino-acid sequence, 461 residues long: Xyloglucan 6-xylosyltransferase 2 (461 aa).

At 1–20 the chain is on the cytoplasmic side; the sequence is MIERCLGAYRCRRIQRALRQ. The helical; Signal-anchor for type II membrane protein transmembrane segment at 21-40 threads the bilayer; sequence LKVTILCLLLTVVVLRSTIG. Topologically, residues 41–461 are lumenal; the sequence is AGKFGTPEQD…KAVKVQTNQV (421 aa). The interval 74–95 is disordered; that stretch reads QTGGDSSSGDGGGNSGGSNNYE. Asn-432 carries an N-linked (GlcNAc...) asparagine glycan.

Belongs to the glycosyltransferase 34 family. As to quaternary structure, homodimer. Interacts with XXT1 and XXT5. Interacts with FUT1 and XLT2.

The protein localises to the golgi apparatus membrane. The catalysed reaction is Transfers an alpha-D-xylosyl residue from UDP-D-xylose to a glucose residue in xyloglucan, forming an alpha-(1-&gt;6)-D-xylosyl-D-glucose linkage.. Xylosyltransferase specific to UDP-D-xylose that accepts both cellopentaose and cellohexaose as substrates, with a better use of cellohexaose, to produce xyloglucan. Adds preferentially the first xylosyl residue to the fourth glucosyl residue from the reducing end of both acceptors. Transfer one xylose mainly to the second glucose residue from the non-reducing end. The acceptor should have a minimum of four glucose residues. Associates with other xyloglucan-synthesizing enzymes to form multiprotein complexes for xyloglucan synthesis in the Golgi. This Arabidopsis thaliana (Mouse-ear cress) protein is Xyloglucan 6-xylosyltransferase 2 (XXT2).